A 103-amino-acid chain; its full sequence is Interleukin-8 (103 aa).

Residues 1-25 (MTSKLAVAFLAVFLLSAALCEAAVL) form the signal peptide. Arginine 27 is modified (citrulline). Disulfide bonds link cysteine 34-cysteine 61 and cysteine 36-cysteine 77.

It belongs to the intercrine alpha (chemokine CxC) family. Homodimer. Interacts with TNFAIP6 (via Link domain); this interaction interferes with chemokine binding to glycosaminoglycans. In terms of processing, citrullination at Arg-27 prevents proteolysis, and dampens tissue inflammation, it also enhances leukocytosis, possibly through impaired chemokine clearance from the blood circulation. Alveolar macrophages.

Its subcellular location is the secreted. Functionally, chemotactic factor that mediates inflammatory response by attracting neutrophils, basophils, and T-cells to clear pathogens and protect the host from infection. Also plays an important role in neutrophil activation. Released in response to an inflammatory stimulus, exerts its effect by binding to the G-protein-coupled receptors CXCR1 and CXCR2, primarily found in neutrophils, monocytes and endothelial cells. G-protein heterotrimer (alpha, beta, gamma subunits) constitutively binds to CXCR1/CXCR2 receptor and activation by IL8 leads to beta and gamma subunits release from Galpha (GNAI2 in neutrophils) and activation of several downstream signaling pathways including PI3K and MAPK pathways. The chain is Interleukin-8 (CXCL8) from Sus scrofa (Pig).